Consider the following 260-residue polypeptide: 1-(5-phosphoribosyl)-5-[(5-phosphoribosylamino)methylideneamino] imidazole-4-carboxamide isomerase (260 aa).

The Proton acceptor role is filled by aspartate 8. Aspartate 130 (proton donor) is an active-site residue.

This sequence belongs to the HisA/HisF family.

It is found in the cytoplasm. The enzyme catalyses 1-(5-phospho-beta-D-ribosyl)-5-[(5-phospho-beta-D-ribosylamino)methylideneamino]imidazole-4-carboxamide = 5-[(5-phospho-1-deoxy-D-ribulos-1-ylimino)methylamino]-1-(5-phospho-beta-D-ribosyl)imidazole-4-carboxamide. It functions in the pathway amino-acid biosynthesis; L-histidine biosynthesis; L-histidine from 5-phospho-alpha-D-ribose 1-diphosphate: step 4/9. The protein is 1-(5-phosphoribosyl)-5-[(5-phosphoribosylamino)methylideneamino] imidazole-4-carboxamide isomerase of Chlorobaculum parvum (strain DSM 263 / NCIMB 8327) (Chlorobium vibrioforme subsp. thiosulfatophilum).